Reading from the N-terminus, the 394-residue chain is MIDHFIMNKLPLELVYYLTNWLKDYDKRMLLSTCKNFLSLQSCVYYEDIYYYEEIHKLSYHQMFRKVELELCKFKTPIPKIVTNLEFDVYFNEPLINRRIKIRNKWVKIRKIIPSTVKYLDMGYSFNKSIRGALSYGLTTLIFGPEFNQPIDNYIPQTVTYLEFSVYFDQPVVGYLPTRLTHLIFGTDFNQPIKGALPDTLEYLYFGWAFNQPIDFALPPNLKCLKFGHCFDQPIKGFLPLGLEKLIFEAEYHQPMDLAIPESVEYLKLGNPGSNSLENCLPINLKTLVFGENFNENLNTLSLDKFRELEKIEFDGFFDQKISSRITIDNVIKSNNFIETFQNFYGMIKYYFNDFINPNRQYLPENVKHIIISTYLYDKICSNISNDVFIEVYN.

3 FNIP repeats span residues 126–167 (FNKS…FSVY), 168–207 (FDQPVVGYLPTRLTHLIFGTDFNQPIKGALPDTLEYLYFG), and 210–250 (FNQP…IFEA).

This is Putative FNIP repeat-containing protein R636 from Acanthamoeba polyphaga mimivirus (APMV).